The following is a 139-amino-acid chain: MRPSRYAPLLCAMVLALAWLSAVAGCSRGGSSKAGRSSSVAGTLPAGVVGVSPAGVTTRVDAPAESTEEEYYQACHAARLWMDAQPGSGESLIEPYLAVVQASPSGVAGSWHIRWAALTPARQAAVIVAARAAANAECG.

The first 25 residues, 1–25 (MRPSRYAPLLCAMVLALAWLSAVAG), serve as a signal peptide directing secretion. A lipid anchor (N-palmitoyl cysteine) is attached at Cys-26. Cys-26 is lipidated: S-diacylglycerol cysteine.

It is found in the cell membrane. The protein is Putative lipoprotein LpqV (lpqV) of Mycobacterium bovis (strain ATCC BAA-935 / AF2122/97).